The primary structure comprises 420 residues: UDP-N-acetyl-D-mannosamine dehydrogenase (420 aa).

Positions 13, 14, 33, 85, and 126 each coordinate NAD(+). Arg160, Val161, Lys212, Asn216, Arg219, His250, Arg252, and Gly263 together coordinate UDP-N-acetyl-alpha-D-mannosaminouronate. Lys212 (proton donor/acceptor) is an active-site residue. The active-site Nucleophile is Cys266. UDP-N-acetyl-alpha-D-mannosaminouronate contacts are provided by Phe330 and Lys331. Arg338 is a binding site for NAD(+). Position 416 (Lys416) interacts with UDP-N-acetyl-alpha-D-mannosaminouronate.

Belongs to the UDP-glucose/GDP-mannose dehydrogenase family. WecC subfamily. As to quaternary structure, homodimer.

It carries out the reaction UDP-N-acetyl-alpha-D-mannosamine + 2 NAD(+) + H2O = UDP-N-acetyl-alpha-D-mannosaminouronate + 2 NADH + 3 H(+). The protein operates within bacterial outer membrane biogenesis; enterobacterial common antigen biosynthesis. In terms of biological role, catalyzes the four-electron oxidation of UDP-N-acetyl-D-mannosamine (UDP-ManNAc), reducing NAD(+) and releasing UDP-N-acetylmannosaminuronic acid (UDP-ManNAcA). This is UDP-N-acetyl-D-mannosamine dehydrogenase from Salmonella typhi.